Reading from the N-terminus, the 503-residue chain is Surface lipoprotein assembly modifier (503 aa).

An N-terminal signal peptide occupies residues 1–34; it reads MTITPVYTTFTPTKTPIKFFMAGLTFLIAHISHA. Residues 38–220 are N-terminal domain; that stretch reads RTDNQEPINQ…QYRQALKQRD (183 aa). A TPR repeat occupies 136 to 169; sequence ILLGYANALAALDKGNAKKAIDELRRIIAIMPEY. Residues 221 to 503 form a C-terminal probable beta barrel region; sequence SWTWQVGMNL…QMFVEFSRIF (283 aa). The next 14 membrane-spanning stretches (beta stranded) occupy residues 222-232, 259-270, 275-285, 299-308, 313-322, 334-343, 348-358, 372-382, 387-396, 410-419, 424-434, 454-463, 470-479, and 493-503; these read WTWQVGMNLAK, LSYQLGADKKWS, AYVGANAQIYG, GRLGANLGFA, DLSIETYGEK, IGIRMSVDYR, FQSLNAIDISR, TLYSTSLIYYP, YYLLGADFYD, RGIRTAWGQE, LSSRAQISINK, MQASLSLWHR, ITPRLTISTN, and NQMFVEFSRIF.

This sequence belongs to the Slam family.

It localises to the cell outer membrane. Functionally, required for correct export to the cell surface of some cell outer membrane lipoproteins (tested with TpbP) upon heterologous expression in E.coli and probably also in Moraxella. This chain is Surface lipoprotein assembly modifier, found in Moraxella catarrhalis (Branhamella catarrhalis).